Here is a 435-residue protein sequence, read N- to C-terminus: Arginine biosynthesis bifunctional protein ArgJ, mitochondrial (435 aa).

Residues Thr179, Lys205, Thr216, Glu302, Asn430, and Ser435 each coordinate substrate. The active-site Nucleophile is Thr216.

Belongs to the ArgJ family. As to quaternary structure, heterodimer of an alpha and a beta chain. In terms of processing, the alpha and beta chains are autoproteolytically processed from a single precursor protein within the mitochondrion.

The protein resides in the mitochondrion matrix. The enzyme catalyses N(2)-acetyl-L-ornithine + L-glutamate = N-acetyl-L-glutamate + L-ornithine. It catalyses the reaction L-glutamate + acetyl-CoA = N-acetyl-L-glutamate + CoA + H(+). It participates in amino-acid biosynthesis; L-arginine biosynthesis; L-ornithine and N-acetyl-L-glutamate from L-glutamate and N(2)-acetyl-L-ornithine (cyclic): step 1/1. Its pathway is amino-acid biosynthesis; L-arginine biosynthesis; N(2)-acetyl-L-ornithine from L-glutamate: step 1/4. Catalyzes two activities which are involved in the cyclic version of arginine biosynthesis: the synthesis of acetylglutamate from glutamate and acetyl-CoA, and of ornithine by transacetylation between acetylornithine and glutamate. The chain is Arginine biosynthesis bifunctional protein ArgJ, mitochondrial from Schizosaccharomyces japonicus (strain yFS275 / FY16936) (Fission yeast).